Here is a 316-residue protein sequence, read N- to C-terminus: uncharacterized protein (316 aa).

Disordered stretches follow at residues 82-105 (AMAA…SGGN) and 238-257 (ASVS…DTQE). Low complexity-rich tracts occupy residues 84–96 (AAAS…SSGT) and 239–255 (SVSV…STDT).

Belongs to the MG307/MG309/MG338 family.

This is an uncharacterized protein from Mycoplasma pneumoniae (strain ATCC 29342 / M129 / Subtype 1) (Mycoplasmoides pneumoniae).